The primary structure comprises 508 residues: Catalase (508 aa).

Positions 1-21 (MHMSKSFLLISMGLASISVHA) are cleaved as a signal peptide. Active-site residues include His-72 and Asn-145. A heme-binding site is contributed by Tyr-353. Positions 373–392 (PKSPVANHNQDGPSNNSTGL) are enriched in polar residues. A disordered region spans residues 373–396 (PKSPVANHNQDGPSNNSTGLGNVD).

Belongs to the catalase family. The cofactor is heme.

Its subcellular location is the periplasm. It carries out the reaction 2 H2O2 = O2 + 2 H2O. Decomposes hydrogen peroxide into water and oxygen; serves to protect cells from the toxic effects of hydrogen peroxide. The polypeptide is Catalase (Vibrio vulnificus (strain CMCP6)).